The primary structure comprises 156 residues: IFN signaling evasion protein OPG029 (156 aa).

This sequence belongs to the orthopoxvirus OPG029 family. Interacts with host TANK, TBKBP1 and AZI2; these interactions prevent interferon production. Interacts with host STAT2.

In terms of biological role, prevents establishment of cellular antiviral state by blocking virus-induced phosphorylation and activation of interferon regulatory factors 3/IRF3 and 7/IRF7, transcription factors critical for the induction of interferons alpha and beta. This blockage is produced through the inhibition of host TBK1, by binding host TBK1 adapter proteins TBKBP1 and AZI2, thereby producing a strong inhibition of the phosphorylation and activation of IRF3 and IRF7. Also acts as an inhibitor of the cellular response to type I IFN by interacting with host STAT2. Mechanistically, exerts its inhibitory effect after host ISGF3 complex (composed of STAT1, STAT2 and IRF9) binding to the interferon stimulated response element (ISRE). The sequence is that of IFN signaling evasion protein OPG029 (OPG029) from Variola virus (isolate Human/India/Ind3/1967) (VARV).